The sequence spans 248 residues: Acetylglutamate kinase (248 aa).

Residues 36–37, arginine 58, and asparagine 147 each bind substrate; that span reads GG.

The protein belongs to the acetylglutamate kinase family. ArgB subfamily.

It is found in the cytoplasm. It carries out the reaction N-acetyl-L-glutamate + ATP = N-acetyl-L-glutamyl 5-phosphate + ADP. It functions in the pathway amino-acid biosynthesis; L-arginine biosynthesis; N(2)-acetyl-L-ornithine from L-glutamate: step 2/4. Its function is as follows. Catalyzes the ATP-dependent phosphorylation of N-acetyl-L-glutamate. This is Acetylglutamate kinase from Thermus thermophilus (strain ATCC BAA-163 / DSM 7039 / HB27).